The sequence spans 1090 residues: Protein unc-13 homolog D (1090 aa).

In terms of domain architecture, C2 1 spans 92–239 (EPEEHQQTLQ…FKEARKDKGQ (148 aa)). Ca(2+)-binding residues include D127 and D133. Position 150 is a phosphoserine (S150). Ca(2+) is bound by residues D206 and D208. An interaction with RAB27A region spans residues 240–543 (DDFLGNVVLR…AKRVQDHTTV (304 aa)). Residues 557–677 (FQLYISLKEL…RLALVYCSLI (121 aa)) enclose the MHD1 domain. The region spanning 788-895 (EDAILPLMKF…ASSRELIRKY (108 aa)) is the MHD2 domain. A C2 2 domain is found at 910-1035 (ELGAVTVKAS…PGLSGSEEPG (126 aa)). Ca(2+) is bound by residues L940, D941, D947, D1005, D1007, and D1013. Residues 1026–1048 (PGLSGSEEPGEVPQTRLPLTYPA) form a disordered region.

Belongs to the unc-13 family. Interacts with DOC2A. Interacts with RAB27A. Interacts with RHOG; the interaction increases RhoG affinity to the membrane lipids, targets UNC13D to membrane lipids and facilitates cytotoxic granule (CG) docking to the plasma membrane. Requires Ca(2+) as cofactor. As to expression, expressed at high levels in spleen, thymus and leukocytes. Also expressed in lung and placenta, and at very low levels in brain, heart, skeletal muscle and kidney. Expressed in cytotoxic T-lymphocytes (CTL) and mast cells.

Its subcellular location is the cytoplasm. It is found in the membrane. It localises to the late endosome. The protein resides in the recycling endosome. The protein localises to the lysosome. Its function is as follows. Plays a role in cytotoxic granule exocytosis in lymphocytes. Required for both granule maturation and granule docking and priming at the immunologic synapse. Regulates assembly of recycling and late endosomal structures, leading to the formation of an endosomal exocytic compartment that fuses with perforin-containing granules at the immunologic synapse and licences them for exocytosis. Regulates Ca(2+)-dependent secretory lysosome exocytosis in mast cells. This Homo sapiens (Human) protein is Protein unc-13 homolog D (UNC13D).